Reading from the N-terminus, the 27-residue chain is Equinin A (27 aa).

The segment covering 1-13 (AVDKGGGKAEKKD) has biased composition (basic and acidic residues). The disordered stretch occupies residues 1–27 (AVDKGGGKAEKKDGNRKKKLAGGEGGG).

It localises to the secreted. In terms of biological role, peptide with unknown function. Does not show antimicrobial and hemolytic activities. The polypeptide is Equinin A (Actinia equina (Beadlet anemone)).